The following is a 203-amino-acid chain: Guanylate kinase (203 aa).

Positions 3-181 (GSLFIVAAPS…AHTDLRAIVQ (179 aa)) constitute a Guanylate kinase-like domain. 10–17 (APSGAGKT) is an ATP binding site.

The protein belongs to the guanylate kinase family.

The protein localises to the cytoplasm. The enzyme catalyses GMP + ATP = GDP + ADP. Essential for recycling GMP and indirectly, cGMP. This is Guanylate kinase from Nitrosococcus oceani (strain ATCC 19707 / BCRC 17464 / JCM 30415 / NCIMB 11848 / C-107).